Here is a 249-residue protein sequence, read N- to C-terminus: Isoprenyl transferase (249 aa).

The active site involves aspartate 25. A Mg(2+)-binding site is contributed by aspartate 25. Substrate contacts are provided by residues 26 to 29 (GNGR), tryptophan 30, arginine 38, histidine 42, and 70 to 72 (STE). Catalysis depends on asparagine 73, which acts as the Proton acceptor. Substrate-binding positions include tryptophan 74, arginine 76, arginine 197, and 203–205 (RLS). Residue glutamate 216 participates in Mg(2+) binding.

It belongs to the UPP synthase family. In terms of assembly, homodimer. Requires Mg(2+) as cofactor.

Its function is as follows. Catalyzes the condensation of isopentenyl diphosphate (IPP) with allylic pyrophosphates generating different type of terpenoids. The polypeptide is Isoprenyl transferase (Streptococcus mutans serotype c (strain ATCC 700610 / UA159)).